The following is a 463-amino-acid chain: Fumarate hydratase class II (463 aa).

Substrate-binding positions include 97–99 (SGT), 128–131 (HPND), 138–140 (SSN), and threonine 186. Histidine 187 serves as the catalytic Proton donor/acceptor. Serine 317 is a catalytic residue. Substrate contacts are provided by residues serine 318 and 323-325 (KVN).

This sequence belongs to the class-II fumarase/aspartase family. Fumarase subfamily. Homotetramer.

The protein resides in the cytoplasm. It catalyses the reaction (S)-malate = fumarate + H2O. Its pathway is carbohydrate metabolism; tricarboxylic acid cycle; (S)-malate from fumarate: step 1/1. In terms of biological role, involved in the TCA cycle. Catalyzes the stereospecific interconversion of fumarate to L-malate. This Helicobacter pylori (strain J99 / ATCC 700824) (Campylobacter pylori J99) protein is Fumarate hydratase class II.